The following is a 184-amino-acid chain: Protein PLANT CADMIUM RESISTANCE 4 (184 aa).

Positions 1–10 (MGRPGSQPNE) are enriched in polar residues. The tract at residues 1–21 (MGRPGSQPNEAQPPPVQVQPT) is disordered. The chain crosses the membrane as a helical span at residues 96 to 116 (GGLLYGMIFFIGVPFVYSCMF).

It belongs to the cornifelin family.

The protein localises to the membrane. May be involved in heavy metals transport. The chain is Protein PLANT CADMIUM RESISTANCE 4 (PCR4) from Arabidopsis thaliana (Mouse-ear cress).